The primary structure comprises 156 residues: ATP synthase subunit b (156 aa).

Residues 7–29 (LLGQAISFALFVWFCMKYVWPPL) form a helical membrane-spanning segment.

It belongs to the ATPase B chain family. F-type ATPases have 2 components, F(1) - the catalytic core - and F(0) - the membrane proton channel. F(1) has five subunits: alpha(3), beta(3), gamma(1), delta(1), epsilon(1). F(0) has three main subunits: a(1), b(2) and c(10-14). The alpha and beta chains form an alternating ring which encloses part of the gamma chain. F(1) is attached to F(0) by a central stalk formed by the gamma and epsilon chains, while a peripheral stalk is formed by the delta and b chains.

It is found in the cell inner membrane. In terms of biological role, f(1)F(0) ATP synthase produces ATP from ADP in the presence of a proton or sodium gradient. F-type ATPases consist of two structural domains, F(1) containing the extramembraneous catalytic core and F(0) containing the membrane proton channel, linked together by a central stalk and a peripheral stalk. During catalysis, ATP synthesis in the catalytic domain of F(1) is coupled via a rotary mechanism of the central stalk subunits to proton translocation. Its function is as follows. Component of the F(0) channel, it forms part of the peripheral stalk, linking F(1) to F(0). This is ATP synthase subunit b from Vibrio alginolyticus.